Here is a 311-residue protein sequence, read N- to C-terminus: Ornithine carbamoyltransferase (311 aa).

Residues 56–59 (STRT), Gln83, Arg107, and 134–137 (HPTQ) each bind carbamoyl phosphate. L-ornithine is bound by residues Asn166, Asp230, and 234–235 (SM). Carbamoyl phosphate-binding positions include 270 to 271 (CL) and Lys298.

The protein belongs to the aspartate/ornithine carbamoyltransferase superfamily. OTCase family.

The protein resides in the cytoplasm. It catalyses the reaction carbamoyl phosphate + L-ornithine = L-citrulline + phosphate + H(+). It participates in amino-acid degradation; L-arginine degradation via ADI pathway; carbamoyl phosphate from L-arginine: step 2/2. Functionally, reversibly catalyzes the transfer of the carbamoyl group from carbamoyl phosphate (CP) to the N(epsilon) atom of ornithine (ORN) to produce L-citrulline. This chain is Ornithine carbamoyltransferase, found in Ignicoccus hospitalis (strain KIN4/I / DSM 18386 / JCM 14125).